A 350-amino-acid chain; its full sequence is Nicotinate-nucleotide--dimethylbenzimidazole phosphoribosyltransferase (350 aa).

The Proton acceptor role is filled by glutamate 317.

Belongs to the CobT family.

The enzyme catalyses 5,6-dimethylbenzimidazole + nicotinate beta-D-ribonucleotide = alpha-ribazole 5'-phosphate + nicotinate + H(+). The protein operates within nucleoside biosynthesis; alpha-ribazole biosynthesis; alpha-ribazole from 5,6-dimethylbenzimidazole: step 1/2. Catalyzes the synthesis of alpha-ribazole-5'-phosphate from nicotinate mononucleotide (NAMN) and 5,6-dimethylbenzimidazole (DMB). This Shewanella sp. (strain MR-4) protein is Nicotinate-nucleotide--dimethylbenzimidazole phosphoribosyltransferase.